Reading from the N-terminus, the 2974-residue chain is Mediator of RNA polymerase II transcription subunit 13 (2974 aa).

Basic and acidic residues-rich tracts occupy residues 284–299 (EKEP…KTPE), 340–367 (MFEP…AREV), 374–390 (RREE…RADD), and 624–633 (SREKRKEYQP). 12 disordered regions span residues 284–309 (EKEP…PQTT), 340–394 (MFEP…NLED), 624–654 (SREK…KRKV), 677–749 (FNAW…FADI), 764–801 (LYNP…PKEE), 1032–1063 (PHGS…QDGE), 1099–1134 (GMLS…YPTP), 1140–1159 (LQAD…FRST), 1281–1342 (TLAR…TPTY), 1416–1486 (QGGL…DATA), 2052–2078 (ELKK…ATPA), and 2247–2309 (QDEA…PAGM). The stretch at 351–396 (KEETAAEKEKRMAAREVRRLRRQRREERRREMEKQRRADDNLEDYD) forms a coiled coil. Basic residues-rich tracts occupy residues 634 to 654 (YHRK…KRKV) and 677 to 688 (FNAWKQKKKGPP). Positions 689 to 717 (PKKDLAKKEAAADKDKDKDKEKDKEKDKD) are enriched in basic and acidic residues. Positions 1035-1048 (SFDHDSEPEFDEQR) are enriched in basic and acidic residues. Polar residues-rich tracts occupy residues 1122 to 1134 (IESQ…YPTP) and 1140 to 1149 (LQADASQAHS). Pro residues-rich tracts occupy residues 1284-1299 (RPPP…PTPM) and 1326-1340 (PAYP…PTTP). Over residues 1443–1464 (IRNTDAPNDPTVSKLQSAVSRN) the composition is skewed to polar residues. Low complexity predominate over residues 1473-1486 (AATSIPTATDDATA). Residues 2064–2073 (STQSENSEGN) show a composition bias toward polar residues. The stretch at 2220-2301 (AVEGRLKRQK…EQYPAEESQA (82 aa)) forms a coiled coil. Composition is skewed to basic and acidic residues over residues 2247-2258 (QDEADKREKMDE) and 2281-2292 (EEKKRNKQKENE). The mediates transcriptional repression stretch occupies residues 2347 to 2974 (WKQRDTRVQN…LYHSVARLLV (628 aa)).

This sequence belongs to the Mediator complex subunit 13 family. In terms of assembly, component of the Mediator complex.

Its subcellular location is the nucleus. Functionally, component of the Mediator complex, a coactivator involved in regulated gene transcription of nearly all RNA polymerase II-dependent genes. Mediator functions as a bridge to convey information from gene-specific regulatory proteins to the basal RNA polymerase II transcription machinery. Mediator is recruited to promoters by direct interactions with regulatory proteins and serves as a scaffold for the assembly of a functional preinitiation complex with RNA polymerase II and the general transcription factors. The sequence is that of Mediator of RNA polymerase II transcription subunit 13 (let-19) from Caenorhabditis briggsae.